We begin with the raw amino-acid sequence, 159 residues long: MTKTQKAEIIEVLSNEFKDAQSVIFCDYKGLSVSKLENLRKMARAKDTKVQVVKNTLATIALSNASLTGVELKDTNILVWGADSVATSKVCADFAKDNEKFVIKSAYVDREAADAAKVEAFAKLPGREELLAMLAATWMAPVTCFTIGLDALRQKKEEA.

The protein belongs to the universal ribosomal protein uL10 family. In terms of assembly, part of the ribosomal stalk of the 50S ribosomal subunit. The N-terminus interacts with L11 and the large rRNA to form the base of the stalk. The C-terminus forms an elongated spine to which L12 dimers bind in a sequential fashion forming a multimeric L10(L12)X complex.

Forms part of the ribosomal stalk, playing a central role in the interaction of the ribosome with GTP-bound translation factors. The chain is Large ribosomal subunit protein uL10 from Sulfurimonas denitrificans (strain ATCC 33889 / DSM 1251) (Thiomicrospira denitrificans (strain ATCC 33889 / DSM 1251)).